We begin with the raw amino-acid sequence, 176 residues long: Ribosome maturation factor RimM (176 aa).

The PRC barrel domain maps to 99 to 174; the sequence is KDEFYVRDLI…IVLIQPELWN (76 aa).

It belongs to the RimM family. As to quaternary structure, binds ribosomal protein uS19.

It is found in the cytoplasm. Functionally, an accessory protein needed during the final step in the assembly of 30S ribosomal subunit, possibly for assembly of the head region. Essential for efficient processing of 16S rRNA. May be needed both before and after RbfA during the maturation of 16S rRNA. It has affinity for free ribosomal 30S subunits but not for 70S ribosomes. The protein is Ribosome maturation factor RimM of Leptospira borgpetersenii serovar Hardjo-bovis (strain JB197).